A 179-amino-acid polypeptide reads, in one-letter code: Cellular nucleic acid-binding protein homolog (179 aa).

7 CCHC-type zinc fingers span residues 17–34 (PRCY…ECTK), 36–53 (SICY…ECTE), 58–75 (KTCY…DCPS), 83–100 (AECY…DCRT), 116–133 (MNCY…DCTM), 135–152 (VKCY…ECQQ), and 157–174 (QLCY…NCTS).

This sequence to human CNBP and to retroviral nucleic acid binding proteins (NBP). Post-translationally, phosphorylated.

The protein resides in the nucleus. Functionally, acts in the sexual differentiation pathway. Is required for efficient conjugation. Double-stranded DNA-binding protein. The chain is Cellular nucleic acid-binding protein homolog (byr3) from Schizosaccharomyces pombe (strain 972 / ATCC 24843) (Fission yeast).